The sequence spans 505 residues: Deoxyguanosinetriphosphate triphosphohydrolase (505 aa).

The 208-residue stretch at 66–273 (RLTHSMEVQQ…MEAADDISYC (208 aa)) folds into the HD domain.

Belongs to the dGTPase family. Type 1 subfamily. Homotetramer. Mg(2+) serves as cofactor.

The enzyme catalyses dGTP + H2O = 2'-deoxyguanosine + triphosphate + H(+). Its function is as follows. dGTPase preferentially hydrolyzes dGTP over the other canonical NTPs. In Escherichia coli (strain K12 / MC4100 / BW2952), this protein is Deoxyguanosinetriphosphate triphosphohydrolase.